The following is an 84-amino-acid chain: Cell division topological specificity factor (84 aa).

This sequence belongs to the MinE family.

In terms of biological role, prevents the cell division inhibition by proteins MinC and MinD at internal division sites while permitting inhibition at polar sites. This ensures cell division at the proper site by restricting the formation of a division septum at the midpoint of the long axis of the cell. This is Cell division topological specificity factor from Pseudomonas aeruginosa (strain LESB58).